The following is an 85-amino-acid chain: UPF0410 protein YdaS (85 aa).

Transmembrane regions (helical) follow at residues 2–22 (LSFLVSLVVAIVIGLIGSAIV), 28–48 (GGIFGSMIAGLIGAWIGHGLL), and 58–78 (FAIFPAIIGAAIFVFLLGLIF).

Belongs to the UPF0410 family.

Its subcellular location is the cell membrane. This Bacillus subtilis (strain 168) protein is UPF0410 protein YdaS (ydaS).